Here is a 128-residue protein sequence, read N- to C-terminus: Prokineticin-2 (128 aa).

The signal sequence occupies residues 1 to 27 (MRSSRCARLLLLLLLPPLLLTPPAGDA). 5 disulfides stabilise this stretch: Cys34–Cys46, Cys40–Cys58, Cys45–Cys106, Cys68–Cys114, and Cys108–Cys124. The interval 71–95 (MTRKNHFGNGRQERRKRKRRRKKKV) is disordered. Residues 83-95 (ERRKRKRRRKKKV) show a composition bias toward basic residues.

Belongs to the AVIT (prokineticin) family.

It localises to the secreted. May function as an output molecule from the suprachiasmatic nucleus (SCN) that transmits behavioral circadian rhythm. May also function locally within the SCN to synchronize output. Potently contracts gastrointestinal (GI) smooth muscle. The sequence is that of Prokineticin-2 (PROK2) from Bos taurus (Bovine).